Consider the following 313-residue polypeptide: D-alanine--D-alanine ligase (313 aa).

Positions 111–306 (KQVWHSLGLP…FQQLVLAILA (196 aa)) constitute an ATP-grasp domain. 137–192 (AAELGFPLIVKPAHEGSSIGMAKVESVEALIAAWQDAARYDSQVLVEQWIAGPEYT) is a binding site for ATP. Residues Asp260, Glu273, and Asn275 each coordinate Mg(2+).

The protein belongs to the D-alanine--D-alanine ligase family. Mg(2+) is required as a cofactor. Requires Mn(2+) as cofactor.

It is found in the cytoplasm. The catalysed reaction is 2 D-alanine + ATP = D-alanyl-D-alanine + ADP + phosphate + H(+). The protein operates within cell wall biogenesis; peptidoglycan biosynthesis. Its function is as follows. Cell wall formation. The protein is D-alanine--D-alanine ligase of Ectopseudomonas mendocina (strain ymp) (Pseudomonas mendocina).